The chain runs to 130 residues: ATP synthase epsilon chain (130 aa).

It belongs to the ATPase epsilon chain family. In terms of assembly, F-type ATPases have 2 components, CF(1) - the catalytic core - and CF(0) - the membrane proton channel. CF(1) has five subunits: alpha(3), beta(3), gamma(1), delta(1), epsilon(1). CF(0) has three main subunits: a, b and c.

The protein resides in the cell membrane. Functionally, produces ATP from ADP in the presence of a proton gradient across the membrane. The polypeptide is ATP synthase epsilon chain (atpC) (Mycoplasmoides gallisepticum (strain R(low / passage 15 / clone 2)) (Mycoplasma gallisepticum)).